The following is an 88-amino-acid chain: Small ribosomal subunit protein bS20 (88 aa).

This sequence belongs to the bacterial ribosomal protein bS20 family.

Its function is as follows. Binds directly to 16S ribosomal RNA. The chain is Small ribosomal subunit protein bS20 from Bradyrhizobium sp. (strain BTAi1 / ATCC BAA-1182).